A 225-amino-acid chain; its full sequence is MTTMAETQTWQTVLGEEKQEPYFQEILDFVKKERKAGKIIYPPQKDIFNALKLTPYEAVKVVILGQDPYHGPNQAHGLAFSVRPGVPAPPSLQNIFKELHADLGVSIPSHGFLEKWAKQGVLLLNAALTVEAGKPQSHANIGWHRFTDKVIESLNDHPEVIVFLLWGSYAQKKSQLITNLRHRILKAPHPSPLSAARGFLGCRHFSKANQLLHEMGRGEIDWALD.

D67 serves as the catalytic Proton acceptor.

The protein belongs to the uracil-DNA glycosylase (UDG) superfamily. UNG family.

It localises to the cytoplasm. The catalysed reaction is Hydrolyzes single-stranded DNA or mismatched double-stranded DNA and polynucleotides, releasing free uracil.. Excises uracil residues from the DNA which can arise as a result of misincorporation of dUMP residues by DNA polymerase or due to deamination of cytosine. The polypeptide is Uracil-DNA glycosylase (Coxiella burnetii (strain Dugway 5J108-111)).